The sequence spans 61 residues: Conotoxin Tx-D021 (61 aa).

An N-terminal signal peptide occupies residues 1 to 22 (MRCLPVFVILLLLIASTPSVDA). Residues 23 to 48 (RAKTRDDMSLASFHDDAKRILQILQD) constitute a propeptide that is removed on maturation. Cys60 carries the post-translational modification Cysteine amide.

The protein belongs to the conotoxin T superfamily. Post-translationally, contains 2 disulfide bonds that can be either 'C1-C3, C2-C4' or 'C1-C4, C2-C3', since these disulfide connectivities have been observed for conotoxins with cysteine framework V (for examples, see AC P0DQQ7 and AC P81755). In terms of tissue distribution, expressed by the venom duct.

It localises to the secreted. This Conus textile (Cloth-of-gold cone) protein is Conotoxin Tx-D021.